A 157-amino-acid polypeptide reads, in one-letter code: GTP-dependent dephospho-CoA kinase (157 aa).

GTP is bound by residues aspartate 40, aspartate 59, lysine 61, glutamate 107, and aspartate 128.

The protein belongs to the GTP-dependent DPCK family.

The catalysed reaction is 3'-dephospho-CoA + GTP = GDP + CoA + H(+). Its pathway is cofactor biosynthesis; coenzyme A biosynthesis. Functionally, catalyzes the GTP-dependent phosphorylation of the 3'-hydroxyl group of dephosphocoenzyme A to form coenzyme A (CoA). The polypeptide is GTP-dependent dephospho-CoA kinase (Desulfurococcus amylolyticus (strain DSM 18924 / JCM 16383 / VKM B-2413 / 1221n) (Desulfurococcus kamchatkensis)).